The primary structure comprises 154 residues: uncharacterized protein (154 aa).

Positions 1–33 (MTKRGIQAFAGGIILATAVLAAVFYLTDEDQAA) are cleaved as a signal peptide.

This is an uncharacterized protein from Bacillus subtilis (strain 168).